A 61-amino-acid chain; its full sequence is Metallothionein-1 (61 aa).

At methionine 1 the chain carries N-acetylmethionine. A beta region spans residues 1–29; the sequence is MDPNCSCATGVSCTCADSCKCKECKCTSC. Cysteine 5, cysteine 7, cysteine 13, cysteine 15, cysteine 19, cysteine 21, cysteine 24, cysteine 26, cysteine 29, cysteine 33, cysteine 34, cysteine 36, cysteine 37, cysteine 41, cysteine 44, cysteine 48, cysteine 50, cysteine 57, cysteine 59, and cysteine 60 together coordinate a divalent metal cation. The interval 30–61 is alpha; it reads KKSCCSCCPVGCAKCAQGCVCKGASEKCNCCA.

Belongs to the metallothionein superfamily. Type 1 family.

Metallothioneins have a high content of cysteine residues that bind various heavy metals; these proteins are transcriptionally regulated by both heavy metals and glucocorticoids. The sequence is that of Metallothionein-1 (MT1) from Chlorocebus aethiops (Green monkey).